We begin with the raw amino-acid sequence, 419 residues long: Synaptosomal-associated protein 47 (419 aa).

T-SNARE coiled-coil homology domains lie at 109–171 and 356–418; these read AANP…LTEL and KDWP…MRKL.

It belongs to the SVAP1 family. Associates with the BLOC-1 complex. Interacts with BLOC1S6. Forms a complex containing SNAP47, VAMP2 and STX1A.

The protein resides in the endomembrane system. It localises to the cytoplasm. It is found in the perinuclear region. In terms of biological role, may play a role in intracellular membrane fusion. The sequence is that of Synaptosomal-associated protein 47 (Snap47) from Rattus norvegicus (Rat).